A 329-amino-acid chain; its full sequence is Aspartate--ammonia ligase (329 aa).

This sequence belongs to the class-II aminoacyl-tRNA synthetase family. AsnA subfamily.

The protein localises to the cytoplasm. It catalyses the reaction L-aspartate + NH4(+) + ATP = L-asparagine + AMP + diphosphate + H(+). It functions in the pathway amino-acid biosynthesis; L-asparagine biosynthesis; L-asparagine from L-aspartate (ammonia route): step 1/1. In Ureaplasma urealyticum serovar 10 (strain ATCC 33699 / Western), this protein is Aspartate--ammonia ligase.